Reading from the N-terminus, the 254-residue chain is Ribosomal RNA small subunit methyltransferase G (254 aa).

The disordered stretch occupies residues 1–21; it reads MPEGDGVPRETPSPSVVPESP. Over residues 9–21 the composition is skewed to low complexity; the sequence is RETPSPSVVPESP. Residues Gly90, Leu95, 142–143, and Arg157 each bind S-adenosyl-L-methionine; that span reads AE. The tract at residues 230 to 254 is disordered; that stretch reads GPLRAATAPAPPGAAKRRPGKGNRR. Positions 244 to 254 are enriched in basic residues; sequence AKRRPGKGNRR.

Belongs to the methyltransferase superfamily. RNA methyltransferase RsmG family.

The protein resides in the cytoplasm. In terms of biological role, specifically methylates the N7 position of guanine in position 518 of 16S rRNA. The protein is Ribosomal RNA small subunit methyltransferase G of Kineococcus radiotolerans (strain ATCC BAA-149 / DSM 14245 / SRS30216).